A 426-amino-acid chain; its full sequence is 3-phosphoshikimate 1-carboxyvinyltransferase (426 aa).

3-phosphoshikimate is bound by residues Lys22, Ser23, and Arg27. Residue Lys22 coordinates phosphoenolpyruvate. Residues Gly96 and Arg124 each contribute to the phosphoenolpyruvate site. Residues Ser170 and Ser171 each contribute to the 3-phosphoshikimate site. Residue Gln172 coordinates phosphoenolpyruvate. Residues Ser198, Asp314, Asn337, and Lys341 each coordinate 3-phosphoshikimate. Asp314 acts as the Proton acceptor in catalysis. Phosphoenolpyruvate-binding residues include Arg345, Arg387, and Lys412.

The protein belongs to the EPSP synthase family. As to quaternary structure, homotetramer.

It localises to the cytoplasm. The catalysed reaction is 3-phosphoshikimate + phosphoenolpyruvate = 5-O-(1-carboxyvinyl)-3-phosphoshikimate + phosphate. The protein operates within metabolic intermediate biosynthesis; chorismate biosynthesis; chorismate from D-erythrose 4-phosphate and phosphoenolpyruvate: step 6/7. Catalyzes the transfer of the enolpyruvyl moiety of phosphoenolpyruvate (PEP) to the 5-hydroxyl of shikimate-3-phosphate (S3P) to produce enolpyruvyl shikimate-3-phosphate and inorganic phosphate. This chain is 3-phosphoshikimate 1-carboxyvinyltransferase, found in Vibrio cholerae serotype O1 (strain ATCC 39315 / El Tor Inaba N16961).